Here is a 128-residue protein sequence, read N- to C-terminus: Serum amyloid A-4 protein (128 aa).

The first 18 residues, M1 to S18, serve as a signal peptide directing secretion. The interval S93–Y128 is disordered. Residues D99 to R120 are compositionally biased toward basic and acidic residues.

Belongs to the SAA family. Apolipoprotein of the HDL complex.

The protein resides in the secreted. Functionally, major acute phase reactant. The protein is Serum amyloid A-4 protein of Sus scrofa (Pig).